The chain runs to 373 residues: Putative citrate synthase 2 (373 aa).

Residues His250 and Glu303 contribute to the active site.

It belongs to the citrate synthase family.

It carries out the reaction oxaloacetate + acetyl-CoA + H2O = citrate + CoA + H(+). It participates in carbohydrate metabolism; tricarboxylic acid cycle; isocitrate from oxaloacetate: step 1/2. The sequence is that of Putative citrate synthase 2 (citA) from Mycobacterium bovis (strain ATCC BAA-935 / AF2122/97).